The sequence spans 475 residues: Cytochrome P450 monooxygenase sthD (475 aa).

A signal peptide spans 1-17 (MAAYFLLGLYGSTLVYR). A helical transmembrane segment spans residues 276–296 (FIIIAGSDTVAATLTFAFFYL). N336 carries an N-linked (GlcNAc...) asparagine glycan. Residue C418 participates in heme binding.

It belongs to the cytochrome P450 family. Heme is required as a cofactor.

The protein localises to the membrane. It carries out the reaction betaenone A + NADPH + O2 + H(+) = stemphyloxin II + NADP(+) + H2O. The catalysed reaction is betaenone C + NADPH + O2 + H(+) = stemphyloxin I + NADP(+) + H2O. Its pathway is mycotoxin biosynthesis. Functionally, cytochrome P450 monooxygenase; part of the gene cluster that mediates the biosynthesis of the phytotoxin stemphyloxin II. The first step of the pathway is the synthesis of dehydroprobetaenone I by the polyketide synthase sthA and the enoyl reductase sthE via condensation of one acetyl-CoA starter unit with 7 malonyl-CoA units and 5 methylations. The C-terminal reductase (R) domain of sthA catalyzes the reductive release of the polyketide chain. Because sthA lacks a designated enoylreductase (ER) domain, the required activity is provided the enoyl reductase sthE. The short-chain dehydrogenase/reductase sthC then catalyzes reduction of dehydroprobetaenone I to probetaenone I. The cytochrome P450 monooxygenase sthF catalyzes successive epoxidation, oxidation (resulting from epoxide opening) and hydroxylation to install a tertiary alcohol in the decaline ring to yield betaenone C from dehydroprobetaenone I and betaenone B from probetaenone I. The FAD-linked oxidoreductase sthB is responsible for the conversion of betaenone C to betaenone A via an intramolecular aldol reaction between C-1 and C-17 to form the bridged tricyclic system in betaenone A. Finally, the cytochrome P450 monooxygenase sthD catalyzes the hydroxylation of C-15 to afford the final metabolite stemphyloxin II. The protein is Cytochrome P450 monooxygenase sthD of Phaeosphaeria nodorum (strain SN15 / ATCC MYA-4574 / FGSC 10173) (Glume blotch fungus).